Here is a 1247-residue protein sequence, read N- to C-terminus: Respiratory nitrate reductase 1 alpha chain (1247 aa).

Residues 43–107 (DKIVRSTHGV…SYSWYLYSAN (65 aa)) enclose the 4Fe-4S Mo/W bis-MGD-type domain. [4Fe-4S] cluster-binding residues include histidine 50, cysteine 54, cysteine 58, and cysteine 93. Mo-bis(molybdopterin guanine dinucleotide) is bound at residue aspartate 223.

The protein belongs to the prokaryotic molybdopterin-containing oxidoreductase family. Dimer of heterotrimers each composed of an alpha, a beta and a gamma chain. Alpha and beta are catalytic chains; gamma chains are involved in binding the enzyme complex to the cytoplasmic membrane. Interacts with the NarJ chaperone. [4Fe-4S] cluster serves as cofactor. It depends on Mo-bis(molybdopterin guanine dinucleotide) as a cofactor.

Its subcellular location is the cell membrane. It carries out the reaction nitrate + a quinol = a quinone + nitrite + H2O. Functionally, the nitrate reductase enzyme complex allows E.coli to use nitrate as an electron acceptor during anaerobic growth. The alpha chain is the actual site of nitrate reduction. This Escherichia coli (strain K12) protein is Respiratory nitrate reductase 1 alpha chain (narG).